Reading from the N-terminus, the 102-residue chain is Small ribosomal subunit protein uS10 (102 aa).

The protein belongs to the universal ribosomal protein uS10 family. As to quaternary structure, part of the 30S ribosomal subunit.

Its function is as follows. Involved in the binding of tRNA to the ribosomes. The chain is Small ribosomal subunit protein uS10 from Bacillus cereus (strain G9842).